The chain runs to 940 residues: UvrABC system protein A (940 aa).

Position 31-38 (31-38 (GLSGSGKS)) interacts with ATP. The segment at 252-279 (CPQCGYSMQELEPRLFSFNNPAGACGTC) adopts a C4-type zinc-finger fold. 2 consecutive ABC transporter domains span residues 309–586 (WDQK…PNSL) and 606–936 (RDPK…RFLK). 639–646 (GVSGSGKS) contributes to the ATP binding site. A C4-type zinc finger spans residues 739–765 (CEACQGDGVIKVEMHFLPDVYVPCDVC).

This sequence belongs to the ABC transporter superfamily. UvrA family. As to quaternary structure, forms a heterotetramer with UvrB during the search for lesions.

The protein resides in the cytoplasm. The UvrABC repair system catalyzes the recognition and processing of DNA lesions. UvrA is an ATPase and a DNA-binding protein. A damage recognition complex composed of 2 UvrA and 2 UvrB subunits scans DNA for abnormalities. When the presence of a lesion has been verified by UvrB, the UvrA molecules dissociate. This chain is UvrABC system protein A, found in Vibrio parahaemolyticus serotype O3:K6 (strain RIMD 2210633).